Reading from the N-terminus, the 126-residue chain is MFPGGGKFNPRMMKQMQKMMKDFGMDAEDLKAVKVTIELEDKLLVFEKPKVQVMDMLGNKTYSITGKAKKVAKEEEKIEDVEVKVEVTEEDIDMVSNQCGVSKEEAKKALEEVNGDLAEAILKLGN.

The NAC-A/B domain maps to 10 to 77; sequence PRMMKQMQKM…AKKVAKEEEK (68 aa).

This sequence belongs to the NAC-alpha family. As to quaternary structure, homodimer. Interacts with the ribosome. Binds ribosomal RNA.

In terms of biological role, contacts the emerging nascent chain on the ribosome. The chain is Nascent polypeptide-associated complex protein from Methanococcus maripaludis (strain DSM 14266 / JCM 13030 / NBRC 101832 / S2 / LL).